The primary structure comprises 276 residues: Secretagogin (276 aa).

6 consecutive EF-hand domains span residues 12 to 47, 58 to 93, 105 to 140, 149 to 184, 197 to 232, and 240 to 276; these read LDAA…VLTK, NVWK…EDEN, DSSV…LFLH, KLEE…QENF, ERKR…MMEL, and VDLD…KINP. Ca(2+)-binding residues include D71, S73, D75, H77, E82, D118, D120, S122, E129, D162, N164, D166, R168, D173, D210, S212, T214, E221, D254, N256, D258, K260, and E265.

It localises to the cytoplasm. Its subcellular location is the secreted. It is found in the cytoplasmic vesicle. The protein resides in the secretory vesicle membrane. The sequence is that of Secretagogin (SCGN) from Sus scrofa (Pig).